The chain runs to 199 residues: MALQVQQTSAAFTISSPSTAAARIKLSPFRTVAVNRGVRCSGGGVGGGDAGKKKAVPNSNYVVPIDKFSSSSSITRPLIEILRDLNKKIPDNIVKSHDPPSTSAATSGFIPWYHANRMLSFYAPGWCGEVRDVIFSENGNVTVVYRLTIRGSDGEAHRESTGTVTTTDDHIEDPVTAAEEIAFCRACARFGLGLYLYHE.

A chloroplast-targeting transit peptide spans 1–40 (MALQVQQTSAAFTISSPSTAAARIKLSPFRTVAVNRGVRC). S41 is modified (N-acetylserine).

It belongs to the RAD52 family. Expressed in roots and shoots. Expressed at low levels in cauline leaves, flower buds, flowers and siliques.

Its subcellular location is the plastid. It localises to the chloroplast. Involved in double-stranded DNA break repair. The protein is DNA repair RAD52-like protein 2, chloroplastic of Arabidopsis thaliana (Mouse-ear cress).